The following is a 556-amino-acid chain: Small ribosomal subunit protein uS3m (556 aa).

It belongs to the universal ribosomal protein uS3 family. Component of the mitochondrial ribosome small subunit.

The protein localises to the mitochondrion. This is Small ribosomal subunit protein uS3m (RPS3) from Arabidopsis thaliana (Mouse-ear cress).